A 58-amino-acid polypeptide reads, in one-letter code: Large ribosomal subunit protein uL30 (58 aa).

The protein belongs to the universal ribosomal protein uL30 family. In terms of assembly, part of the 50S ribosomal subunit.

This Porphyromonas gingivalis (strain ATCC 33277 / DSM 20709 / CIP 103683 / JCM 12257 / NCTC 11834 / 2561) protein is Large ribosomal subunit protein uL30.